The chain runs to 215 residues: MOB kinase activator-like 1B (215 aa).

Positions 1–25 are disordered; sequence MSLFGLGRNQKTFRPKKSAPSGTKG. 4 residues coordinate Zn(2+): Cys79, Cys84, His161, and His166.

This sequence belongs to the MOB1/phocein family. Interacts with SIK1. As to expression, expression is detected along the vasculature in cotyledons, hypocotyls and roots of 3- to 4-day-old seedlings.

The polypeptide is MOB kinase activator-like 1B (Arabidopsis thaliana (Mouse-ear cress)).